A 293-amino-acid polypeptide reads, in one-letter code: Nucleotide-binding protein BA_5384/GBAA_5384/BAS5004 (293 aa).

An ATP-binding site is contributed by 14–21 (GMSGAGKT). 65 to 68 (DLRG) is a GTP binding site.

It belongs to the RapZ-like family.

Functionally, displays ATPase and GTPase activities. The protein is Nucleotide-binding protein BA_5384/GBAA_5384/BAS5004 of Bacillus anthracis.